The following is a 387-amino-acid chain: Gamma-butyrobetaine dioxygenase (387 aa).

Residues C38, C40, C43, and H82 each coordinate Zn(2+). Residues H202, D204, and H347 each contribute to the Fe cation site. Residue S351 is modified to Phosphoserine.

Belongs to the gamma-BBH/TMLD family. The cofactor is Fe(2+). L-ascorbate is required as a cofactor.

Its subcellular location is the cytoplasm. The catalysed reaction is 4-(trimethylamino)butanoate + 2-oxoglutarate + O2 = carnitine + succinate + CO2. Its pathway is amine and polyamine biosynthesis; carnitine biosynthesis. In terms of biological role, catalyzes the formation of L-carnitine from gamma-butyrobetaine. This Mus musculus (Mouse) protein is Gamma-butyrobetaine dioxygenase (Bbox1).